The chain runs to 465 residues: Indoleacetamide hydrolase (465 aa).

The disordered stretch occupies residues 1-40 (MVRGRHRSRDPQRRDLRGRDRRSASRTDARRQSAAERGCR). The span at 9–39 (RDPQRRDLRGRDRRSASRTDARRQSAAERGC) shows a compositional bias: basic and acidic residues. Residue Ser-149 is the Charge relay system of the active site. Ser-173 (acyl-ester intermediate) is an active-site residue.

The protein belongs to the amidase family.

It participates in plant hormone metabolism; auxin biosynthesis. Functionally, hydrolyzes indole-3-acetamide (IAM) into indole-3-acetic acid (IAA). The sequence is that of Indoleacetamide hydrolase (bam) from Bradyrhizobium japonicum.